Here is a 91-residue protein sequence, read N- to C-terminus: Acylphosphatase (91 aa).

Positions 5–91 (CSKFIVSGHV…EHDYQGFEIL (87 aa)) constitute an Acylphosphatase-like domain. N38 is an active-site residue.

Belongs to the acylphosphatase family.

It catalyses the reaction an acyl phosphate + H2O = a carboxylate + phosphate + H(+). In Vibrio cholerae serotype O1 (strain ATCC 39541 / Classical Ogawa 395 / O395), this protein is Acylphosphatase (acyP).